We begin with the raw amino-acid sequence, 247 residues long: Carboxy-S-adenosyl-L-methionine synthase (247 aa).

Residues Y39, 64 to 66, 89 to 90, 117 to 118, N132, and R199 each bind S-adenosyl-L-methionine; these read GCS, DN, and DI.

Belongs to the class I-like SAM-binding methyltransferase superfamily. Cx-SAM synthase family. Homodimer.

It catalyses the reaction prephenate + S-adenosyl-L-methionine = carboxy-S-adenosyl-L-methionine + 3-phenylpyruvate + H2O. In terms of biological role, catalyzes the conversion of S-adenosyl-L-methionine (SAM) to carboxy-S-adenosyl-L-methionine (Cx-SAM). In Salmonella paratyphi B (strain ATCC BAA-1250 / SPB7), this protein is Carboxy-S-adenosyl-L-methionine synthase.